The sequence spans 406 residues: NADH-quinone oxidoreductase subunit D (406 aa).

It belongs to the complex I 49 kDa subunit family. NDH-1 is composed of 14 different subunits. Subunits NuoB, C, D, E, F, and G constitute the peripheral sector of the complex.

The protein resides in the cell inner membrane. It catalyses the reaction a quinone + NADH + 5 H(+)(in) = a quinol + NAD(+) + 4 H(+)(out). Functionally, NDH-1 shuttles electrons from NADH, via FMN and iron-sulfur (Fe-S) centers, to quinones in the respiratory chain. The immediate electron acceptor for the enzyme in this species is believed to be ubiquinone. Couples the redox reaction to proton translocation (for every two electrons transferred, four hydrogen ions are translocated across the cytoplasmic membrane), and thus conserves the redox energy in a proton gradient. The sequence is that of NADH-quinone oxidoreductase subunit D from Rhizorhabdus wittichii (strain DSM 6014 / CCUG 31198 / JCM 15750 / NBRC 105917 / EY 4224 / RW1) (Sphingomonas wittichii).